Consider the following 538-residue polypeptide: ATP-dependent rRNA helicase RRP3 (538 aa).

A compositionally biased stretch (basic residues) spans 1–11 (MSSAKRVKLSH). The interval 1–112 (MSSAKRVKLS…SKEETPTKSF (112 aa)) is disordered. Over residues 34 to 47 (KKITQAPKAAAPIK) the composition is skewed to low complexity. A compositionally biased stretch (acidic residues) spans 53–85 (AEEDDDDDDKDDKDEEDEEQNDDSSDEASENDD). The span at 92-112 (EATKEGQTELPSKEETPTKSF) shows a compositional bias: basic and acidic residues. The short motif at 110 to 138 (KSFRDLGIVEPLCEACEALKFKKPTPIQE) is the Q motif element. The Helicase ATP-binding domain maps to 141–312 (IPLALQGRDV…RASLRDPLKV (172 aa)). 154-161 (AETGSGKT) is a binding site for ATP. Positions 260–263 (DEAD) match the DEAD box motif. Residues 336–486 (HKDVYLIYLA…LFQPDKEEVM (151 aa)) form the Helicase C-terminal domain. Basic and acidic residues predominate over residues 498–512 (HAREEMKALHEDRGK). Residues 498–538 (HAREEMKALHEDRGKKGAVLKGRKRGSATKRRHDDMDAEEG) form a disordered region. Positions 513–528 (KGAVLKGRKRGSATKR) are enriched in basic residues.

This sequence belongs to the DEAD box helicase family. DDX47/RRP3 subfamily. Interacts with the SSU processome.

It is found in the nucleus. It carries out the reaction ATP + H2O = ADP + phosphate + H(+). Its function is as follows. ATP-dependent rRNA helicase required for pre-ribosomal RNA processing. Involved in the maturation of the 35S-pre-rRNA and to its cleavage to mature 18S rRNA. This is ATP-dependent rRNA helicase RRP3 from Pyricularia oryzae (strain 70-15 / ATCC MYA-4617 / FGSC 8958) (Rice blast fungus).